The sequence spans 472 residues: Bone morphogenetic protein 3 (472 aa).

A signal peptide spans 1-22; the sequence is MAGASRLLFLWLGCFCVSLAQG. Positions 23 to 362 are excised as a propeptide; that stretch reads ERPKPPFPEL…EQTLKKARRK (340 aa). The span at 27 to 37 shows a compositional bias: basic and acidic residues; sequence PPFPELRKAVP. The segment at 27–53 is disordered; it reads PPFPELRKAVPGDRTAGGGPDSELQPQ. N-linked (GlcNAc...) asparagine glycans are attached at residues asparagine 117, asparagine 141, asparagine 175, and asparagine 220. The segment at 320-350 is disordered; it reads PYKTLQAQAPEKSKNKKKQRKGPHRKSQTLQ. Residues 333-346 show a composition bias toward basic residues; sequence KNKKKQRKGPHRKS. Disulfide bonds link cysteine 370-cysteine 437, cysteine 399-cysteine 469, and cysteine 403-cysteine 471. Asparagine 463 is a glycosylation site (N-linked (GlcNAc...) asparagine).

This sequence belongs to the TGF-beta family. In terms of assembly, homodimer; disulfide-linked. Interacts with type II receptor ACVR2B. Expressed in adult and fetal cartilage.

Its subcellular location is the secreted. Growth factor of the TGF-beta superfamily that plays an essential role in developmental process by inducing and patterning early skeletal formation and by negatively regulating bone density. Antagonizes the ability of certain osteogenic BMPs to induce osteoprogenitor differentiation and ossification. Initiates signaling cascades by associating with type II receptor ACVR2B to activate SMAD2-dependent and SMAD-independent signaling cascades including TAK1 and JNK pathways. The polypeptide is Bone morphogenetic protein 3 (BMP3) (Homo sapiens (Human)).